The primary structure comprises 247 residues: 5-oxoprolinase subunit A (247 aa).

This sequence belongs to the LamB/PxpA family. Forms a complex composed of PxpA, PxpB and PxpC.

The catalysed reaction is 5-oxo-L-proline + ATP + 2 H2O = L-glutamate + ADP + phosphate + H(+). Its function is as follows. Catalyzes the cleavage of 5-oxoproline to form L-glutamate coupled to the hydrolysis of ATP to ADP and inorganic phosphate. The protein is 5-oxoprolinase subunit A of Histophilus somni (strain 129Pt) (Haemophilus somnus).